A 285-amino-acid chain; its full sequence is NADPH-dependent 7-cyano-7-deazaguanine reductase (285 aa).

91-93 (IES) is a substrate binding site. 93-94 (SK) lines the NADPH pocket. Cys193 serves as the catalytic Thioimide intermediate. Asp200 acts as the Proton donor in catalysis. Substrate is bound at residue 232–233 (HE). Position 261–262 (261–262 (RG)) interacts with NADPH.

It belongs to the GTP cyclohydrolase I family. QueF type 2 subfamily. In terms of assembly, homodimer.

It localises to the cytoplasm. It carries out the reaction 7-aminomethyl-7-carbaguanine + 2 NADP(+) = 7-cyano-7-deazaguanine + 2 NADPH + 3 H(+). Its pathway is tRNA modification; tRNA-queuosine biosynthesis. Its function is as follows. Catalyzes the NADPH-dependent reduction of 7-cyano-7-deazaguanine (preQ0) to 7-aminomethyl-7-deazaguanine (preQ1). The protein is NADPH-dependent 7-cyano-7-deazaguanine reductase of Shewanella frigidimarina (strain NCIMB 400).